A 498-amino-acid chain; its full sequence is ATP synthase subunit beta, chloroplastic (498 aa).

172 to 179 (GGAGVGKT) is an ATP binding site.

This sequence belongs to the ATPase alpha/beta chains family. As to quaternary structure, F-type ATPases have 2 components, CF(1) - the catalytic core - and CF(0) - the membrane proton channel. CF(1) has five subunits: alpha(3), beta(3), gamma(1), delta(1), epsilon(1). CF(0) has four main subunits: a(1), b(1), b'(1) and c(9-12).

It localises to the plastid. It is found in the chloroplast thylakoid membrane. It catalyses the reaction ATP + H2O + 4 H(+)(in) = ADP + phosphate + 5 H(+)(out). In terms of biological role, produces ATP from ADP in the presence of a proton gradient across the membrane. The catalytic sites are hosted primarily by the beta subunits. This is ATP synthase subunit beta, chloroplastic from Gossypium hirsutum (Upland cotton).